Consider the following 694-residue polypeptide: Elongation factor G (694 aa).

The region spanning 8-287 (EDYRNFGIMA…AVVSYLPSPI (280 aa)) is the tr-type G domain. GTP is bound by residues 17-24 (AHIDAGKT), 86-90 (DTPGH), and 140-143 (NKMD).

The protein belongs to the TRAFAC class translation factor GTPase superfamily. Classic translation factor GTPase family. EF-G/EF-2 subfamily.

The protein resides in the cytoplasm. Functionally, catalyzes the GTP-dependent ribosomal translocation step during translation elongation. During this step, the ribosome changes from the pre-translocational (PRE) to the post-translocational (POST) state as the newly formed A-site-bound peptidyl-tRNA and P-site-bound deacylated tRNA move to the P and E sites, respectively. Catalyzes the coordinated movement of the two tRNA molecules, the mRNA and conformational changes in the ribosome. This Bartonella tribocorum (strain CIP 105476 / IBS 506) protein is Elongation factor G.